We begin with the raw amino-acid sequence, 104 residues long: Large ribosomal subunit protein uL24 (104 aa).

The protein belongs to the universal ribosomal protein uL24 family. As to quaternary structure, part of the 50S ribosomal subunit.

In terms of biological role, one of two assembly initiator proteins, it binds directly to the 5'-end of the 23S rRNA, where it nucleates assembly of the 50S subunit. Its function is as follows. One of the proteins that surrounds the polypeptide exit tunnel on the outside of the subunit. The chain is Large ribosomal subunit protein uL24 from Caulobacter vibrioides (strain ATCC 19089 / CIP 103742 / CB 15) (Caulobacter crescentus).